The following is a 194-amino-acid chain: Glycerol-3-phosphate acyltransferase (194 aa).

The next 6 helical transmembrane spans lie at 2-22 (AFFC…GVWI), 52-72 (LGVA…YIAS), 80-100 (DLVI…FISF), 112-132 (VFLF…ILVA), 137-157 (YVSL…FFTH), and 161-181 (YLFA…KTNI).

This sequence belongs to the PlsY family. As to quaternary structure, probably interacts with PlsX.

It localises to the cell inner membrane. The catalysed reaction is an acyl phosphate + sn-glycerol 3-phosphate = a 1-acyl-sn-glycero-3-phosphate + phosphate. It functions in the pathway lipid metabolism; phospholipid metabolism. In terms of biological role, catalyzes the transfer of an acyl group from acyl-phosphate (acyl-PO(4)) to glycerol-3-phosphate (G3P) to form lysophosphatidic acid (LPA). This enzyme utilizes acyl-phosphate as fatty acyl donor, but not acyl-CoA or acyl-ACP. This Fusobacterium nucleatum subsp. nucleatum (strain ATCC 25586 / DSM 15643 / BCRC 10681 / CIP 101130 / JCM 8532 / KCTC 2640 / LMG 13131 / VPI 4355) protein is Glycerol-3-phosphate acyltransferase.